Consider the following 383-residue polypeptide: 1-deoxy-D-xylulose 5-phosphate reductoisomerase (383 aa).

Positions 10, 11, 12, 13, 38, and 121 each coordinate NADPH. Lys122 serves as a coordination point for 1-deoxy-D-xylulose 5-phosphate. Residue Glu123 coordinates NADPH. Asp147 contacts Mn(2+). Positions 148, 149, 172, and 195 each coordinate 1-deoxy-D-xylulose 5-phosphate. Glu149 serves as a coordination point for Mn(2+). Gly201 is an NADPH binding site. The 1-deoxy-D-xylulose 5-phosphate site is built by Ser208, Asn213, Lys214, and Glu217. Glu217 serves as a coordination point for Mn(2+).

This sequence belongs to the DXR family. The cofactor is Mg(2+). Requires Mn(2+) as cofactor.

It carries out the reaction 2-C-methyl-D-erythritol 4-phosphate + NADP(+) = 1-deoxy-D-xylulose 5-phosphate + NADPH + H(+). It functions in the pathway isoprenoid biosynthesis; isopentenyl diphosphate biosynthesis via DXP pathway; isopentenyl diphosphate from 1-deoxy-D-xylulose 5-phosphate: step 1/6. Its function is as follows. Catalyzes the NADPH-dependent rearrangement and reduction of 1-deoxy-D-xylulose-5-phosphate (DXP) to 2-C-methyl-D-erythritol 4-phosphate (MEP). This is 1-deoxy-D-xylulose 5-phosphate reductoisomerase from Vesicomyosocius okutanii subsp. Calyptogena okutanii (strain HA).